A 328-amino-acid polypeptide reads, in one-letter code: WUSCHEL-related homeobox 6 (328 aa).

Polar residues predominate over residues 1–11 (MEGSSNSPDRQ). A disordered region spans residues 1–45 (MEGSSNSPDRQSSGGSPPEERGGGGSGGGGGRSAAGEPVRSRWTP). Residues 23–33 (GGGSGGGGGRS) are compositionally biased toward gly residues. The homeobox; WUS-type DNA-binding region spans 38–102 (PVRSRWTPKP…NRRSRSRRRQ (65 aa)).

Belongs to the WUS homeobox family.

It is found in the nucleus. Its function is as follows. Transcription factor which may be involved in developmental processes. This chain is WUSCHEL-related homeobox 6 (WOX6), found in Oryza sativa subsp. indica (Rice).